A 251-amino-acid chain; its full sequence is Cell division protein ZapD (251 aa).

Belongs to the ZapD family. As to quaternary structure, interacts with FtsZ.

It is found in the cytoplasm. In terms of biological role, cell division factor that enhances FtsZ-ring assembly. Directly interacts with FtsZ and promotes bundling of FtsZ protofilaments, with a reduction in FtsZ GTPase activity. This is Cell division protein ZapD from Burkholderia thailandensis (strain ATCC 700388 / DSM 13276 / CCUG 48851 / CIP 106301 / E264).